The following is a 319-amino-acid chain: MKNIAILSSGGDVSGMNPAIKHFVEYALHNGLTPYFVYNGFEGLIDNKITKASHSDVAGIINRGGTILGSSRSKRFMLKNYREVAKKNLDALDIDMLIVLGGDGSFRGMDIFYKEHGVKFCGIPSTIDNDINGTIYCLGVDTALNVIKDSIDNIRDTASSFSRAFVIETMGRDCGYLALVSSLCSGAELCLIPEVEYNLSSYEDSFKEQIKNGRKYFIVIVSEGIKDNSKEIAEWLEQKVGIESRVTVLGHTQRGGTPSIYDRLMAYKFVNHAIDALLGDINSSVVCYSKTGFIHKDIDEITSQKYMLDPELLSYLKKF.

ATP-binding positions include G11, 72–73, and 102–105; these read RS and GDGS. D103 contacts Mg(2+). Residue 126 to 128 participates in substrate binding; it reads TID. The active-site Proton acceptor is the D128. R155 contributes to the ADP binding site. Substrate-binding positions include R163 and 170-172; that span reads MGR. 186-188 is an ADP binding site; the sequence is GAE. Substrate contacts are provided by residues E223, R245, and 251–254; that span reads HTQR.

It belongs to the phosphofructokinase type A (PFKA) family. ATP-dependent PFK group I subfamily. Prokaryotic clade 'B1' sub-subfamily. Homotetramer. It depends on Mg(2+) as a cofactor.

It localises to the cytoplasm. The enzyme catalyses beta-D-fructose 6-phosphate + ATP = beta-D-fructose 1,6-bisphosphate + ADP + H(+). Its pathway is carbohydrate degradation; glycolysis; D-glyceraldehyde 3-phosphate and glycerone phosphate from D-glucose: step 3/4. With respect to regulation, allosterically activated by ADP and other diphosphonucleosides, and allosterically inhibited by phosphoenolpyruvate. In terms of biological role, catalyzes the phosphorylation of D-fructose 6-phosphate to fructose 1,6-bisphosphate by ATP, the first committing step of glycolysis. The protein is ATP-dependent 6-phosphofructokinase of Sulfurimonas denitrificans (strain ATCC 33889 / DSM 1251) (Thiomicrospira denitrificans (strain ATCC 33889 / DSM 1251)).